The chain runs to 468 residues: Mitochondrial adenyl nucleotide antiporter SLC25A23 (468 aa).

Positions 1–149 are regulatory N-terminal domain; it reads MRGSPGDAER…DHFLLHSLEN (149 aa). Residues 1-188 are Mitochondrial intermembrane-facing; sequence MRGSPGDAER…EKLTGMWWKQ (188 aa). The region spanning 9-44 is the EF-hand 1 domain; the sequence is ERRQRWGRLFEELDSNKDGRVDVHELRQGLARLGGG. Positions 22, 24, 26, 28, and 33 each coordinate Ca(2+). A disordered region spans residues 34-67; it reads LRQGLARLGGGNPDPGAQQGISSEGDADPDGGLD. The segment covering 58–67 has biased composition (acidic residues); the sequence is GDADPDGGLD. 2 consecutive EF-hand domains span residues 77-112 and 113-148; these read EREQ…LGIS and ISLE…HSLE. Ca(2+) is bound by residues Asp90, Asn92, Asp94, His96, and Glu101. The linker region stretch occupies residues 150-159; sequence VEDVLYFWKH. The segment at 165–468 is C-terminal transmembrane transporter domain; the sequence is IGECLTVPDE…MKQALGVTSR (304 aa). Solcar repeat units lie at residues 183-269, 277-362, and 374-462; these read GMWW…IKRA, LHVQ…LKNW, and PGIL…MKQA. The chain crosses the membrane as a helical span at residues 189 to 206; the sequence is LVAGAVAGAVSRTGTAPL. Topologically, residues 207-243 are mitochondrial matrix; it reads DRLKVFMQVHASKTNRLNILGGLRSMVLEGGIRSLWR. The helical transmembrane segment at 244-263 threads the bilayer; it reads GNGINVLKIAPESAIKFMAY. At 264 to 286 the chain is on the mitochondrial intermembrane side; it reads EQIKRAILGQQETLHVQERFVAG. Residues 287 to 300 form a helical membrane-spanning segment; that stretch reads SLAGATAQTIIYPM. Residues 301–336 are Mitochondrial matrix-facing; the sequence is EVLKTRLTLRRTGQYKGLLDCARRILEREGPRAFYR. The helical transmembrane segment at 337–356 threads the bilayer; that stretch reads GYLPNVLGIIPYAGIDLAVY. Residues 357–379 lie on the Mitochondrial intermembrane side of the membrane; it reads ETLKNWWLQQYSHDSADPGILVL. A helical transmembrane segment spans residues 380 to 397; that stretch reads LACGTISSTCGQIASYPL. Residues 398 to 436 lie on the Mitochondrial matrix side of the membrane; sequence ALVRTRMQAQASIEGGPQLSMLGLLRHILSQEGMRGLYR. The helical transmembrane segment at 437–456 threads the bilayer; that stretch reads GIAPNFMKVIPAVSISYVVY. Residues 457 to 468 are Mitochondrial intermembrane-facing; the sequence is ENMKQALGVTSR.

This sequence belongs to the mitochondrial carrier (TC 2.A.29) family. As to quaternary structure, interacts with MCU. Interacts with MICU1. Expressed at low levels in most tissues examined, with highest expression in brain, skeletal muscle and pancreas.

The protein resides in the mitochondrion inner membrane. It catalyses the reaction Mg(2+)(out) + phosphate(in) + ATP(out) = Mg(2+)(in) + phosphate(out) + ATP(in). It carries out the reaction ADP(out) + phosphate(in) + H(+)(out) = ADP(in) + phosphate(out) + H(+)(in). The enzyme catalyses AMP(out) + phosphate(in) = AMP(in) + phosphate(out). The catalysed reaction is phosphate(in) + ATP(out) + 2 H(+)(out) = phosphate(out) + ATP(in) + 2 H(+)(in). It catalyses the reaction dADP(in) + ADP(out) = dADP(out) + ADP(in). It carries out the reaction Mg(2+)(in) + ADP(out) + ATP(in) + H(+)(out) = Mg(2+)(out) + ADP(in) + ATP(out) + H(+)(in). The enzyme catalyses ADP(out) + diphosphate(in) = ADP(in) + diphosphate(out). The catalysed reaction is dAMP(in) + ADP(out) + H(+)(out) = dAMP(out) + ADP(in) + H(+)(in). It catalyses the reaction 3'-AMP(in) + ADP(out) + H(+)(out) = 3'-AMP(out) + ADP(in) + H(+)(in). It carries out the reaction dAMP(out) + phosphate(in) = dAMP(in) + phosphate(out). The enzyme catalyses 3'-AMP(out) + phosphate(in) = 3'-AMP(in) + phosphate(out). The catalysed reaction is dADP(out) + phosphate(in) + H(+)(out) = dADP(in) + phosphate(out) + H(+)(in). Activated by an increase in cytosolic calcium levels that induce a conformational change of the N-terminal regulatory domain, uncapping the channel and allowing transport. Inhibited by bathophenanthroline, mersalyl, p-hydroxymercuribenzoate, bromcresol purple, tannic acid, pyridoxal 5'-phosphate and p-hydroxymercuribenzoate. Its function is as follows. Electroneutral antiporter that mediates the transport of adenine nucleotides through the inner mitochondrial membrane. Originally identified as an ATP-magnesium/inorganic phosphate antiporter, it also acts as a broad specificity adenyl nucleotide antiporter. By regulating the mitochondrial matrix adenine nucleotide pool could adapt to changing cellular energetic demands and indirectly regulate adenine nucleotide-dependent metabolic pathways. Also acts as a regulator of mitochondrial calcium uptake and can probably transport trace amounts of other divalent metal cations in complex with ATP. In vitro, a low activity is also observed with guanyl and pyrimidine nucleotides. This chain is Mitochondrial adenyl nucleotide antiporter SLC25A23, found in Homo sapiens (Human).